The sequence spans 443 residues: F-box/LRR-repeat protein At2g42720 (443 aa).

The F-box domain maps to 1–47; it reads MDRISSLPDEILEHILSFLSTKEAALTSSLSTRWKNVFVFVPSLHLD. LRR repeat units lie at residues 139-167, 169-194, 201-236, 271-296, 323-348, and 363-389; these read KLRL…CLDT, DFDG…VLED, CGSV…ELSC, SSHL…HLTS, DKKQ…VFKG, and CSGI…SYQG.

This is F-box/LRR-repeat protein At2g42720 from Arabidopsis thaliana (Mouse-ear cress).